A 416-amino-acid polypeptide reads, in one-letter code: Gamma-glutamyl phosphate reductase (416 aa).

This sequence belongs to the gamma-glutamyl phosphate reductase family.

The protein localises to the cytoplasm. The enzyme catalyses L-glutamate 5-semialdehyde + phosphate + NADP(+) = L-glutamyl 5-phosphate + NADPH + H(+). Its pathway is amino-acid biosynthesis; L-proline biosynthesis; L-glutamate 5-semialdehyde from L-glutamate: step 2/2. Functionally, catalyzes the NADPH-dependent reduction of L-glutamate 5-phosphate into L-glutamate 5-semialdehyde and phosphate. The product spontaneously undergoes cyclization to form 1-pyrroline-5-carboxylate. The chain is Gamma-glutamyl phosphate reductase from Petrotoga mobilis (strain DSM 10674 / SJ95).